Here is a 156-residue protein sequence, read N- to C-terminus: Putative pre-16S rRNA nuclease (156 aa).

Belongs to the YqgF nuclease family.

The protein resides in the cytoplasm. Its function is as follows. Could be a nuclease involved in processing of the 5'-end of pre-16S rRNA. The sequence is that of Putative pre-16S rRNA nuclease from Gloeobacter violaceus (strain ATCC 29082 / PCC 7421).